Reading from the N-terminus, the 448-residue chain is Exodeoxyribonuclease 7 large subunit (448 aa).

Belongs to the XseA family. Heterooligomer composed of large and small subunits.

Its subcellular location is the cytoplasm. It catalyses the reaction Exonucleolytic cleavage in either 5'- to 3'- or 3'- to 5'-direction to yield nucleoside 5'-phosphates.. In terms of biological role, bidirectionally degrades single-stranded DNA into large acid-insoluble oligonucleotides, which are then degraded further into small acid-soluble oligonucleotides. In Tolumonas auensis (strain DSM 9187 / NBRC 110442 / TA 4), this protein is Exodeoxyribonuclease 7 large subunit.